The primary structure comprises 472 residues: Relaxin-3 receptor 1 (472 aa).

Over 1 to 81 (MQVASATPAA…ESTDTEARVR (81 aa)) the chain is Extracellular. 2 N-linked (GlcNAc...) asparagine glycosylation sites follow: N36 and N40. Residues 82 to 102 (ILISAVYWVVCALGLAGNLLV) traverse the membrane as a helical segment. At 103-119 (LYLMKSKQGWRKSSINL) the chain is on the cytoplasmic side. The helical transmembrane segment at 120 to 140 (FVTNLALTDFQFVLTLPFWAV) threads the bilayer. The Extracellular segment spans residues 141-156 (ENALDFKWPFGKAMCK). C155 and C247 are oxidised to a cystine. A helical transmembrane segment spans residues 157-177 (IVSMVTSMNMYASVFFLTAMS). The Cytoplasmic portion of the chain corresponds to 178–215 (VARYHSVASALKSHRTRGRGRGDCCGQSLRESCCFSAK). A helical transmembrane segment spans residues 216 to 236 (VLCGLIWASAALASLPNAIFS). The Extracellular portion of the chain corresponds to 237–270 (TTIRVLGEELCLMHFPDKLLGWDRQFWLGLYHLQ). A helical transmembrane segment spans residues 271–291 (KVLLGFLLPLSIISLCYLLLV). The Cytoplasmic segment spans residues 292–298 (RFISDRR). A helical transmembrane segment spans residues 299-319 (VVGTTDAVGAAAAPGGGLSTA). Topologically, residues 320–332 (SARRRSKVTKSVT) are extracellular. A helical transmembrane segment spans residues 333 to 353 (IVVLSFFLCWLPNQALTTWSI). Over 354-472 (LIKFNAVPFS…YDLLPSSSAY (119 aa)) the chain is Cytoplasmic.

Belongs to the G-protein coupled receptor 1 family.

The protein resides in the cell membrane. Receptor for RNL3/relaxin-3. Binding of the ligand inhibit cAMP accumulation. The protein is Relaxin-3 receptor 1 (Rxfp3) of Mus musculus (Mouse).